Here is a 298-residue protein sequence, read N- to C-terminus: ATP phosphoribosyltransferase (298 aa).

This sequence belongs to the ATP phosphoribosyltransferase family. Long subfamily. Mg(2+) serves as cofactor.

It localises to the cytoplasm. It carries out the reaction 1-(5-phospho-beta-D-ribosyl)-ATP + diphosphate = 5-phospho-alpha-D-ribose 1-diphosphate + ATP. It participates in amino-acid biosynthesis; L-histidine biosynthesis; L-histidine from 5-phospho-alpha-D-ribose 1-diphosphate: step 1/9. Feedback inhibited by histidine. Functionally, catalyzes the condensation of ATP and 5-phosphoribose 1-diphosphate to form N'-(5'-phosphoribosyl)-ATP (PR-ATP). Has a crucial role in the pathway because the rate of histidine biosynthesis seems to be controlled primarily by regulation of HisG enzymatic activity. This chain is ATP phosphoribosyltransferase, found in Vibrio vulnificus (strain CMCP6).